A 679-amino-acid polypeptide reads, in one-letter code: Protein asunder (679 aa).

Residues 519–541 adopt a coiled-coil conformation; the sequence is RLKVNKTKDQYRLFYRELEQLIQ. Residues 564-610 form a disordered region; the sequence is GDASNKSDPSAAHLRSYTESPLSPERLEPTNSVNSSSSSILKASKRR. A Nuclear localization signal (NLS) motif is present at residues 604–610; that stretch reads LKASKRR.

This sequence belongs to the Integrator subunit 13 family. As to quaternary structure, belongs to the multiprotein complex Integrator, at least composed of IntS1, IntS2, IntS3, IntS4, omd/IntS5, IntS6, defl/IntS7, IntS8, IntS9, IntS10, IntS11, IntS12, asun/IntS13, IntS14 and IntS15. The core complex associates with protein phosphatase 2A subunits mts/PP2A and Pp2A-29B, to form the Integrator-PP2A (INTAC) complex. Phosphorylated.

The protein resides in the nucleus. It localises to the cytoplasm. The protein localises to the perinuclear region. Functionally, component of the integrator complex, a multiprotein complex that terminates RNA polymerase II (Pol II) transcription in the promoter-proximal region of genes. The integrator complex provides a quality checkpoint during transcription elongation by driving premature transcription termination of transcripts that are unfavorably configured for transcriptional elongation: the complex terminates transcription by (1) catalyzing dephosphorylation of the C-terminal domain (CTD) of Pol II subunit Polr2A/Rbp1 and Spt5, and (2) degrading the exiting nascent RNA transcript via endonuclease activity. The integrator complex is also involved in the 3'-end processing of the U7 snRNA, and also the spliceosomal snRNAs U1, U2, U4 and U5. The sequence is that of Protein asunder (asun) from Drosophila mojavensis (Fruit fly).